The chain runs to 570 residues: GTPase Obg (570 aa).

One can recognise an Obg domain in the interval 2–168 (SDFVDRVTVH…RDIILELKSI (167 aa)). The disordered stretch occupies residues 15 to 43 (GDGGNGSAGIRREKYKPLAGPNGGNGGKG). The OBG-type G domain occupies 169–349 (ADVALVGFPS…LNFALAKLVK (181 aa)). GTP-binding positions include 175–182 (GFPSAGKS), 200–204 (FTTLV), 221–224 (DVPG), 301–304 (NKID), and 330–332 (STA). Mg(2+) contacts are provided by serine 182 and threonine 202. An OCT domain is found at 382–468 (GRNAQVREFE…ERAVAFDWDP (87 aa)). The disordered stretch occupies residues 521-570 (RAAMQAERAAGHWADPSIDDDRHDEQSLFGRGEVEEYEDEPGADGSRQLD).

This sequence belongs to the TRAFAC class OBG-HflX-like GTPase superfamily. OBG GTPase family. Monomer. Mg(2+) serves as cofactor.

The protein resides in the cytoplasm. Its function is as follows. An essential GTPase which binds GTP, GDP and possibly (p)ppGpp with moderate affinity, with high nucleotide exchange rates and a fairly low GTP hydrolysis rate. Plays a role in control of the cell cycle, stress response, ribosome biogenesis and in those bacteria that undergo differentiation, in morphogenesis control. The polypeptide is GTPase Obg (Bifidobacterium animalis subsp. lactis (strain AD011)).